Here is a 1308-residue protein sequence, read N- to C-terminus: Cilia- and flagella-associated protein 57 C (1308 aa).

7 WD repeats span residues 57–99, 110–154, 415–454, 504–546, 551–590, 645–689, and 694–733; these read NEYR…RRKN, YNIK…KCLG, NHTGPINSMDICKRKPIIATCSTDKTIKIWDYEKKQIKIS, SPFK…NPSQ, GHTGRVKCIAWSSDDSFLLSCGLDGMILAWKLDQDFQHQQ, LLDI…GKFT, and HDERGVEKMKITNDDRYIITAGKDGCIMVFEIKDKDARGM. Residues 779-1000 adopt a coiled-coil conformation; sequence LNSRDDRIRQ…RDKIDGQKKI (222 aa).

The protein belongs to the CFAP57 family. In terms of assembly, forms a heterodimer with CFAP57A. Associates with components of the nexin-dynein regulatory complex (N-DRC) and the CFAP184:CFAP263 complex.

The protein resides in the cell projection. Its subcellular location is the cilium. Its function is as follows. Associates with components of the nexin-dynein regulatory complex (N-DRC), a key regulator of ciliary/flagellar motility, and might act as an inner dynein arm (IDA) hub or linkage. The protein is Cilia- and flagella-associated protein 57 C (CFAP57C) of Tetrahymena thermophila (strain SB210).